Here is a 2372-residue protein sequence, read N- to C-terminus: NBAS subunit of NRZ tethering complex (2372 aa).

WD repeat units follow at residues 119–158 (DPNP…LFII) and 304–343 (GEQD…LRGS). Residues 447 to 468 (LESSVKGEEDDGDDDSDSDEEA) form a disordered region. Residues 454–467 (EEDDGDDDSDSDEE) show a composition bias toward acidic residues. Residues 629–668 (YEDFLSMEEELEQRKERESKKRQELLKKVDFSKLTLEQKE) are a coiled coil.

The protein localises to the endoplasmic reticulum. Involved in Golgi-to-endoplasmic reticulum (ER) retrograde transport; the function is proposed to depend on its association in the NRZ complex which is believed to play a role in SNARE assembly at the ER. Required for normal embryonic development. May play a role in the nonsense-mediated decay pathway of mRNAs containing premature stop codons. This Danio rerio (Zebrafish) protein is NBAS subunit of NRZ tethering complex.